We begin with the raw amino-acid sequence, 729 residues long: Rab-like protein 6 (729 aa).

Met1 bears the N-acetylmethionine mark. The segment at 39-279 (GVQYNMKIVI…IFLEMMEARS (241 aa)) is small GTPase-like. Residues 50–57 (GDRNTGKT), 100–104 (DVVDK), and 177–179 (YRD) contribute to the GTP site. A disordered region spans residues 281 to 729 (GHASPLAANG…HPGGGDYEEL (449 aa)). Residues 290–315 (GQSPSPGSQSPVVPAGAVSTGSSSPG) are compositionally biased toward low complexity. The span at 331-351 (SSVPPVPPSEALPPPACPSAP) shows a compositional bias: pro residues. Basic and acidic residues predominate over residues 395–416 (PDDRLDRSFLEDTTPARDEKKV). Residues Ser402, Ser425, Ser427, Ser470, Ser471, Ser492, Ser525, and Ser577 each carry the phosphoserine modification. The segment covering 489–502 (QQCSEPETKWSSIP) has biased composition (polar residues). Basic and acidic residues predominate over residues 581–595 (DTQRRADDFPVRDDP). Ser596 carries the post-translational modification Phosphoserine. Positions 596–605 (SDVTDEDEGP) are enriched in acidic residues. Position 599 is a phosphothreonine (Thr599). Residues 606 to 615 (AEPPPPPKLP) show a composition bias toward pro residues. Over residues 635–652 (AGPKESSEEGKEGKTPSK) the composition is skewed to basic and acidic residues. Ser640 and Ser641 each carry phosphoserine. Residues 655–693 (KKKKKKGKEEEEKAAKKKSKHKKSKDKEEGKEERRRRQQ) are interaction with CDKN2A. A compositionally biased stretch (basic residues) spans 669 to 678 (AKKKSKHKKS). Positions 679 to 689 (KDKEEGKEERR) are enriched in basic and acidic residues. The segment covering 711–729 (LGGGAPGGRHPGGGDYEEL) has biased composition (gly residues).

Belongs to the small GTPase superfamily. Rab family. Isoform 1 is O-glycosylated, while other isoforms are not.

The protein resides in the cytoplasm. It is found in the nucleus. May enhance cellular proliferation. May reduce growth inhibitory activity of CDKN2A. This Homo sapiens (Human) protein is Rab-like protein 6 (RABL6).